A 129-amino-acid chain; its full sequence is uncharacterized protein (129 aa).

Positions 52–94 are disordered; the sequence is NGDEESQDDWLNDLLKSDGDGGKAGPVDPSHPMETTTTDHSSQ. The span at 53–62 shows a compositional bias: acidic residues; sequence GDEESQDDWL. The segment covering 84 to 94 has biased composition (polar residues); sequence METTTTDHSSQ.

This is an uncharacterized protein from Caenorhabditis elegans.